We begin with the raw amino-acid sequence, 192 residues long: Peptidyl-tRNA hydrolase (192 aa).

Tyrosine 17 contacts tRNA. Histidine 22 functions as the Proton acceptor in the catalytic mechanism. Positions 68, 70, and 116 each coordinate tRNA.

Belongs to the PTH family. Monomer.

It localises to the cytoplasm. It carries out the reaction an N-acyl-L-alpha-aminoacyl-tRNA + H2O = an N-acyl-L-amino acid + a tRNA + H(+). Its function is as follows. Hydrolyzes ribosome-free peptidyl-tRNAs (with 1 or more amino acids incorporated), which drop off the ribosome during protein synthesis, or as a result of ribosome stalling. Catalyzes the release of premature peptidyl moieties from peptidyl-tRNA molecules trapped in stalled 50S ribosomal subunits, and thus maintains levels of free tRNAs and 50S ribosomes. This chain is Peptidyl-tRNA hydrolase, found in Hydrogenovibrio crunogenus (strain DSM 25203 / XCL-2) (Thiomicrospira crunogena).